The sequence spans 109 residues: Aquaporin-2 (109 aa).

Residues 1 to 6 are Cytoplasmic-facing; the sequence is SIAFSR. Residues 7–27 form a helical membrane-spanning segment; that stretch reads AVLAEFLATLLFVFFGLGSAL. The Extracellular portion of the chain corresponds to 28–35; that stretch reads NWPQAMPS. The chain crosses the membrane as a helical span at residues 36–54; that stretch reads VLQIAMAFGLAIGTLVQAL. Over 55–59 the chain is Cytoplasmic; that stretch reads GHVSG. The discontinuously helical intramembrane region spans 60–69; sequence AHINPAVTVA. An NPA 1 motif is present at residues 63–65; it reads NPA. The Cytoplasmic portion of the chain corresponds to 70-80; sequence CLVGCHVSFLR. A helical membrane pass occupies residues 81–102; it reads AAFYVAAQLLGAVAGAALLHEI. Residues 103–109 lie on the Extracellular side of the membrane; the sequence is TPPDIRR.

It belongs to the MIP/aquaporin (TC 1.A.8) family. Homotetramer. In terms of processing, serine phosphorylation is necessary and sufficient for expression at the apical membrane. Endocytosis is not phosphorylation-dependent. N-glycosylated.

The protein resides in the apical cell membrane. The protein localises to the basolateral cell membrane. It localises to the cell membrane. It is found in the cytoplasmic vesicle membrane. Its subcellular location is the golgi apparatus. The protein resides in the trans-Golgi network membrane. It catalyses the reaction H2O(in) = H2O(out). The enzyme catalyses glycerol(in) = glycerol(out). Forms a water-specific channel that provides the plasma membranes of renal collecting duct with high permeability to water, thereby permitting water to move in the direction of an osmotic gradient. Plays an essential role in renal water homeostasis. Could also be permeable to glycerol. The sequence is that of Aquaporin-2 from Equus caballus (Horse).